We begin with the raw amino-acid sequence, 243 residues long: High affinity immunoglobulin epsilon receptor subunit beta (243 aa).

The disordered stretch occupies residues 1–48; it reads MDTENKSRADLALPNPQESPSAPDIELLEASPPAKALPEKPASPPPQQ. Residues 1 to 59 are Cytoplasmic-facing; that stretch reads MDTENKSRADLALPNPQESPSAPDIELLEASPPAKALPEKPASPPPQQTWQSFLKKELE. Residues 60–79 form a helical membrane-spanning segment; that stretch reads FLGVTQVLVGLICLCFGTVV. At 80–97 the chain is on the extracellular side; it reads CSTLQTSDFDDEVLLLYR. Residues 98–117 traverse the membrane as a helical segment; sequence AGYPFWGAVLFVLSGFLSIM. At 118-130 the chain is on the cytoplasmic side; sequence SERKNTLYLVRGS. A helical transmembrane segment spans residues 131 to 150; the sequence is LGANIVSSIAAGLGIAILIL. Residues 151-179 lie on the Extracellular side of the membrane; the sequence is NLSNNSAYMNYCKDITEDDGCFVTSFITE. The chain crosses the membrane as a helical span at residues 180 to 199; that stretch reads LVLMLLFLTILAFCSAVLLI. Residues 200–243 lie on the Cytoplasmic side of the membrane; it reads IYRIGQEFERSKVPDDRLYEELHVYSPIYSALEDTREASAPVVS. A phosphotyrosine mark is found at Y218 and Y224. Residue S225 is modified to Phosphoserine. Y228 carries the phosphotyrosine modification.

It belongs to the MS4A family. Tetramer of an alpha chain, a beta chain, and two disulfide linked gamma chains. Binds LILRB1. Interacts with FES/FPS and LYN. Interacts with FGR. In terms of processing, phosphorylated on tyrosine residues by LYN.

The protein localises to the membrane. In terms of biological role, high affinity receptor that binds to the Fc region of immunoglobulins epsilon. Aggregation of FCER1 by multivalent antigens is required for the full mast cell response, including the release of preformed mediators (such as histamine) by degranulation and de novo production of lipid mediators and cytokines. Also mediates the secretion of important lymphokines. Binding of allergen to receptor-bound IgE leads to cell activation and the release of mediators responsible for the manifestations of allergy. This chain is High affinity immunoglobulin epsilon receptor subunit beta (Ms4a2), found in Rattus norvegicus (Rat).